Consider the following 256-residue polypeptide: Myb family transcription factor MPH1 (256 aa).

In terms of domain architecture, HTH myb-type spans 14 to 74 (RSEVPRMRWT…HLQMYRSGSS (61 aa)). The H-T-H motif DNA-binding region spans 45–70 (PKRILQLMGVKGVSISHIKSHLQMYR).

As to expression, highly expressed in the pulvinus and stem nodes. Expressed in the plumule of germinating seeds, coleoptile, leaves, internodes, leave sheaths, spikes and roots.

It is found in the nucleus. In terms of biological role, probable transcription factor involved in the regulation of plant height by elongating internode cell length. Involved in the positive regulation of grain yield. May be involved in the regulation of genes related to cell elongation and cell wall synthesis, which are associated with plant height and yield phenotypes. Plays a role in tolerance to cadmium stress. The protein is Myb family transcription factor MPH1 of Oryza sativa subsp. japonica (Rice).